The primary structure comprises 242 residues: tRNA pseudouridine synthase A (242 aa).

Aspartate 51 (nucleophile) is an active-site residue. Tyrosine 107 is a substrate binding site.

The protein belongs to the tRNA pseudouridine synthase TruA family. In terms of assembly, homodimer.

The catalysed reaction is uridine(38/39/40) in tRNA = pseudouridine(38/39/40) in tRNA. Functionally, formation of pseudouridine at positions 38, 39 and 40 in the anticodon stem and loop of transfer RNAs. This Helicobacter pylori (strain HPAG1) protein is tRNA pseudouridine synthase A.